A 172-amino-acid polypeptide reads, in one-letter code: 3-hydroxydecanoyl-[acyl-carrier-protein] dehydratase (172 aa).

H71 is a catalytic residue.

The protein belongs to the thioester dehydratase family. FabA subfamily. In terms of assembly, homodimer.

Its subcellular location is the cytoplasm. It catalyses the reaction a (3R)-hydroxyacyl-[ACP] = a (2E)-enoyl-[ACP] + H2O. The enzyme catalyses (3R)-hydroxydecanoyl-[ACP] = (2E)-decenoyl-[ACP] + H2O. It carries out the reaction (2E)-decenoyl-[ACP] = (3Z)-decenoyl-[ACP]. Its pathway is lipid metabolism; fatty acid biosynthesis. In terms of biological role, necessary for the introduction of cis unsaturation into fatty acids. Catalyzes the dehydration of (3R)-3-hydroxydecanoyl-ACP to E-(2)-decenoyl-ACP and then its isomerization to Z-(3)-decenoyl-ACP. Can catalyze the dehydratase reaction for beta-hydroxyacyl-ACPs with saturated chain lengths up to 16:0, being most active on intermediate chain length. In Aliivibrio fischeri (strain ATCC 700601 / ES114) (Vibrio fischeri), this protein is 3-hydroxydecanoyl-[acyl-carrier-protein] dehydratase.